Here is a 7760-residue protein sequence, read N- to C-terminus: Malpinin synthetase (7760 aa).

Disordered regions lie at residues 42–115 (ENPE…VNEK) and 161–180 (LDLPTDRPRPSHPSFEGDRV). Over residues 65–79 (TPRSASPLSSYTGSP) the composition is skewed to polar residues. Residues 87–389 (TELSRTLSGD…LSLDERTFLL (303 aa)) are condensation 1. Positions 164-180 (PTDRPRPSHPSFEGDRV) are enriched in basic and acidic residues. Residues 409 to 813 (FEQQAERRPH…GRNDHQVKIR (405 aa)) form an adenylation 1 region. The 75-residue stretch at 926 to 1000 (PPQGELETAI…AFAHAIGQHR (75 aa)) folds into the Carrier 1 domain. S961 carries the O-(pantetheine 4'-phosphoryl)serine modification. The dual epimerase/condensation (E/C) domain 1 stretch occupies residues 1046 to 1477 (QDIYALAPLQ…VLPADERKLL (432 aa)). Positions 1498 to 1893 (FEQYADRVPN…GRTDYQVKIR (396 aa)) are adenylation 2. One can recognise a Carrier 2 domain in the interval 2003 to 2077 (APEGEVENAI…ALAQSIGEHR (75 aa)). At S2038 the chain carries O-(pantetheine 4'-phosphoryl)serine. Residues 2099–2558 (PLIDLNQNDI…LPTEERQLLT (460 aa)) form a dual epimerase/condensation (E/C) domain 2 region. The interval 2578–2973 (FEQHVDRAPD…GRADFQVKIR (396 aa)) is adenylation 3. The 75-residue stretch at 3083–3157 (APQGAVEAAI…ALAQSIGEHR (75 aa)) folds into the Carrier 3 domain. Position 3118 is an O-(pantetheine 4'-phosphoryl)serine (S3118). Residues 3203-3634 (QDIYALAPLQ…HLNVLPAEER (432 aa)) are dual epimerase/condensation (E/C) domain 3. Residues 3658 to 4057 (FEQQAERTPD…GRNDDQIKIR (400 aa)) form an adenylation 4 region. The Carrier 4 domain maps to 4174–4248 (APQGEVETAL…AFASRVQEQL (75 aa)). An O-(pantetheine 4'-phosphoryl)serine modification is found at S4209. The interval 4267–4705 (LPLSFAQQRL…AAEILSQDER (439 aa)) is condensation 2. An adenylation 5 region spans residues 4729–5133 (FEQRVESTPD…GRNDHQVKIR (405 aa)). In terms of domain architecture, Carrier 5 spans 5250–5324 (APEGEVETAI…VFAASIGHHQ (75 aa)). S5285 is subject to O-(pantetheine 4'-phosphoryl)serine. The dual dehydration/condensation (C*) domain stretch occupies residues 5370–5804 (QDIYSLSPLQ…VLPAEERTLL (435 aa)). The interval 5825 to 6224 (FEQQSERTPE…GRNDDQVKIR (400 aa)) is adenylation 6. A Carrier 6 domain is found at 6338–6412 (APQGEVETAL…ALAQSIGQHH (75 aa)). Position 6373 is an O-(pantetheine 4'-phosphoryl)serine (S6373). A dual epimerase/condensation (E/C) domain 4 region spans residues 6458-6890 (QDIYALSPLQ…QLDTVPAEEH (433 aa)). The tract at residues 6914–7300 (FEHQVERTPA…KFLPDGNVVC (387 aa)) is adenylation 7. Residues 7428-7503 (EPRGAIENIL…ELAPRLLATG (76 aa)) form the Carrier 7 domain. Position 7463 is an O-(pantetheine 4'-phosphoryl)serine (S7463). The interval 7561–7722 (DNGNMASSLD…KPYVQGSIEV (162 aa)) is thioesterase (TE) domain.

This sequence belongs to the NRP synthetase family.

Heptamodular nonribosomal peptide synthetase that catalyzes the biosynthesis of malpinins, natural products that show biosurfactant activities. Malpinins are acetylated hexapeptides (Ac-D-Leu/Val-D-Arg-D-Leu/Val-L-Phe/Leu-Dhb-D-Trp) containing a non-canonical amino acid derived from dehydration of L-Trp, (Z)-dehydrobutyrine (Dhb), at position 5, as well as a C-terminal D-amino acid, D-tryptophan, that can be oxidized to kynurenine. Incorporated D-amino acids in positions 1, 3 and 4 are variable resulting in the malpinin A-congeners malpinin B to E. Both modules M1 and M3 have relaxed specificity towards aliphatic amino acids (L-Leu &gt; L-Met &gt; L/D-Val &gt; L-Cys), explaining Val at position 1 and 3 in malpinin A-congeners malpinin B to D. The incorporation of L-Leu, but not N-acetyl-L-Leu by module 1 suggests the N-terminal acetylation occurs at a later stage of biosynthesis. Similar to M1 and M3, M4 has a broad substrate spectrum showing the highest activity with L-Phe followed by other hydrophobic amino acids (L-Phe &gt; L-Met = L-Trp). In contrast, M2, M5 and M6 are highly specific for L-Arg, L-Thr, and L-Trp, respectively. Solely, M7 converted its preferred substrate (L-Phe) with a 15 000-fold reduced turnover rate compared to the most active module M6, indicating that its A domain cannot contribute to the malpinin biosynthesis due to low activity. Since the last T domain in malA is apparently not loaded with an amino acid, either the TE domain must offload the oligopeptide from the preceding T domain or the dual E/C domain of M7 must transfer the final peptide chain to the free acceptor T domain of M7 prior to release. This chain is Malpinin synthetase, found in Mortierella alpina (Oleaginous fungus).